Consider the following 76-residue polypeptide: DNA-directed RNA polymerase subunit epsilon (76 aa).

It belongs to the RNA polymerase subunit epsilon family. In terms of assembly, RNAP is composed of a core of 2 alpha, a beta and a beta' subunit. The core is associated with a delta subunit, and at least one of epsilon or omega. When a sigma factor is associated with the core the holoenzyme is formed, which can initiate transcription.

It catalyses the reaction RNA(n) + a ribonucleoside 5'-triphosphate = RNA(n+1) + diphosphate. In terms of biological role, a non-essential component of RNA polymerase (RNAP). This is DNA-directed RNA polymerase subunit epsilon from Lactococcus lactis subsp. lactis (strain IL1403) (Streptococcus lactis).